We begin with the raw amino-acid sequence, 219 residues long: 3-demethoxyubiquinol 3-hydroxylase (219 aa).

The disordered stretch occupies residues arginine 21 to serine 51. Residues alanine 35 to alanine 46 are compositionally biased toward low complexity. Fe cation contacts are provided by glutamate 68, glutamate 98, histidine 101, glutamate 150, glutamate 182, and histidine 185.

The protein belongs to the COQ7 family. Requires Fe cation as cofactor.

It localises to the cell membrane. It catalyses the reaction a 5-methoxy-2-methyl-3-(all-trans-polyprenyl)benzene-1,4-diol + AH2 + O2 = a 3-demethylubiquinol + A + H2O. It functions in the pathway cofactor biosynthesis; ubiquinone biosynthesis. Functionally, catalyzes the hydroxylation of 2-nonaprenyl-3-methyl-6-methoxy-1,4-benzoquinol during ubiquinone biosynthesis. The polypeptide is 3-demethoxyubiquinol 3-hydroxylase (Alcanivorax borkumensis (strain ATCC 700651 / DSM 11573 / NCIMB 13689 / SK2)).